The following is a 447-amino-acid chain: Phosphoglucosamine mutase (447 aa).

Ser-100 (phosphoserine intermediate) is an active-site residue. The Mg(2+) site is built by Ser-100, Asp-240, Asp-242, and Asp-244. At Ser-100 the chain carries Phosphoserine.

This sequence belongs to the phosphohexose mutase family. Mg(2+) serves as cofactor. Activated by phosphorylation.

The catalysed reaction is alpha-D-glucosamine 1-phosphate = D-glucosamine 6-phosphate. Catalyzes the conversion of glucosamine-6-phosphate to glucosamine-1-phosphate. This is Phosphoglucosamine mutase from Clostridium botulinum (strain Eklund 17B / Type B).